The sequence spans 95 residues: MVYISNGQVLDSRSQSPWRLSFITDFFWGIAEFVVLFFRTLLQQDVKKRRGYGSSSDSRYDDGRGPPGNPPRRRMGRINHLQGPNPPPMAGGUGR.

The chain crosses the membrane as a helical span at residues 20-42 (LSFITDFFWGIAEFVVLFFRTLL). The segment at 47–95 (KKRRGYGSSSDSRYDDGRGPPGNPPRRRMGRINHLQGPNPPPMAGGUGR) is disordered. Sec-93 is a non-standard amino acid (selenocysteine).

It belongs to the selenoprotein K family. As to quaternary structure, interacts with DERL1, DERL2, DERL3 and SELENOS. The SELENOK-SELENOS complex interacts with VCP. Interacts with ZDHHC6. Cleaved by CAPN2/m-calpain in resting macrophages but not in activated macrophages. Macrophage activation up-regulates expression of the calpain inhibitor CAST/calpastatin, resulting in inhibition of CAPN2 activity. Post-translationally, truncated SELENOK proteins produced by failed UGA/Sec decoding are ubiquitinated by the CRL2(KLHDC2) complex, which recognizes the diglycine (Gly-Gly) at the C-terminus of truncated SELENOK proteins.

The protein localises to the endoplasmic reticulum membrane. The protein resides in the cell membrane. Its function is as follows. Required for Ca(2+) flux in immune cells and plays a role in T-cell proliferation and in T-cell and neutrophil migration. Involved in endoplasmic reticulum-associated degradation (ERAD) of soluble glycosylated proteins. Required for palmitoylation and cell surface expression of CD36 and involved in macrophage uptake of low-density lipoprotein and in foam cell formation. Together with ZDHHC6, required for palmitoylation of ITPR1 in immune cells, leading to regulate ITPR1 stability and function. Plays a role in protection of cells from ER stress-induced apoptosis. Protects cells from oxidative stress when overexpressed in cardiomyocytes. In Bos taurus (Bovine), this protein is Selenoprotein K.